Reading from the N-terminus, the 212-residue chain is Ribonuclease HII (212 aa).

The RNase H type-2 domain maps to 1–199 (MIGGIDEAGR…VGGRIGLGRN (199 aa)). Residues Asp6, Glu7, and Asp101 each coordinate a divalent metal cation.

It belongs to the RNase HII family. Mn(2+) serves as cofactor. The cofactor is Mg(2+).

It is found in the cytoplasm. The enzyme catalyses Endonucleolytic cleavage to 5'-phosphomonoester.. Its function is as follows. Endonuclease that specifically degrades the RNA of RNA-DNA hybrids. This chain is Ribonuclease HII, found in Pyrobaculum aerophilum (strain ATCC 51768 / DSM 7523 / JCM 9630 / CIP 104966 / NBRC 100827 / IM2).